Consider the following 411-residue polypeptide: 2,3-bisphosphoglycerate-independent phosphoglycerate mutase 1 (411 aa).

This sequence belongs to the BPG-independent phosphoglycerate mutase family. A-PGAM subfamily. In terms of assembly, homotetramer. Requires Mg(2+) as cofactor.

The enzyme catalyses (2R)-2-phosphoglycerate = (2R)-3-phosphoglycerate. It functions in the pathway carbohydrate degradation; glycolysis; pyruvate from D-glyceraldehyde 3-phosphate: step 3/5. With respect to regulation, inhibited to approximately 20% by EDTA. Its function is as follows. Catalyzes the interconversion of 2-phosphoglycerate and 3-phosphoglycerate. The chain is 2,3-bisphosphoglycerate-independent phosphoglycerate mutase 1 (apgM1) from Methanocaldococcus jannaschii (strain ATCC 43067 / DSM 2661 / JAL-1 / JCM 10045 / NBRC 100440) (Methanococcus jannaschii).